The sequence spans 279 residues: Zinc finger AN1 and C2H2 domain-containing stress-associated protein 11 (279 aa).

AN1-type zinc fingers lie at residues 7–55 (PDLG…REDV) and 95–145 (ATKK…KLPF). Cysteine 13, cysteine 18, cysteine 28, cysteine 31, cysteine 36, histidine 39, histidine 45, cysteine 47, cysteine 101, cysteine 106, cysteine 118, cysteine 121, cysteine 126, histidine 129, histidine 135, and cysteine 137 together coordinate Zn(2+). The interval 152 to 178 (STTRKEAKTTRPNKAHPSTSSSSSSSR) is disordered. Low complexity predominate over residues 169-178 (STSSSSSSSR). 2 C2H2-type zinc fingers span residues 213-236 (EVCP…EKTH) and 250-273 (DVCP…ERDH).

May be involved in environmental stress response. The sequence is that of Zinc finger AN1 and C2H2 domain-containing stress-associated protein 11 (SAP11) from Arabidopsis thaliana (Mouse-ear cress).